Consider the following 277-residue polypeptide: Uridine-cytidine kinase 1 (277 aa).

The segment at 1–30 (MASAGGGGSESAAPEADRPQPRPFLIGVSG) is disordered. 30 to 38 (GGTASGKST) lines the ATP pocket. The substrate site is built by D87, Y115, H120, R169, R178, and Q186. Position 215 (D215) interacts with ATP. Residues 238-250 (RHRGGPNGRNHKR) show a composition bias toward basic residues. A disordered region spans residues 238–277 (RHRGGPNGRNHKRTFPEPGDHPGVLATGKRSHLESSSRPH). At T251 the chain carries Phosphothreonine. Residues 268 to 277 (SHLESSSRPH) are compositionally biased toward basic and acidic residues.

Belongs to the uridine kinase family.

It catalyses the reaction uridine + ATP = UMP + ADP + H(+). It carries out the reaction cytidine + ATP = CMP + ADP + H(+). Its pathway is pyrimidine metabolism; CTP biosynthesis via salvage pathway; CTP from cytidine: step 1/3. It functions in the pathway pyrimidine metabolism; UMP biosynthesis via salvage pathway; UMP from uridine: step 1/1. Its function is as follows. Phosphorylates uridine and cytidine to uridine monophosphate and cytidine monophosphate. Does not phosphorylate deoxyribonucleosides or purine ribonucleosides. Can use ATP or GTP as a phosphate donor. The protein is Uridine-cytidine kinase 1 (Uck1) of Mus musculus (Mouse).